The primary structure comprises 160 residues: Nucleotide-binding protein VV1636 (160 aa).

This sequence belongs to the YajQ family.

Functionally, nucleotide-binding protein. The protein is Nucleotide-binding protein VV1636 of Vibrio vulnificus (strain YJ016).